The sequence spans 421 residues: MSKTHLTEQKFSDFALHPAVIEALEKKGFHNCTPIQALALPLTLEGRDVAGQAQTGTGKTMAFLTSTFHYLLSHPAIADRQVNQPRALIMAPTRELAVQIHADAEPLAQATGLKLGLAYGGDGYDKQLKVLESGVDILIGTTGRLIDYAKQNHINLGAIQVVVLDEADRMYDLGFIKDIRWLFRRMPPATQRLNMLFSATLSYRVRELAFEQMNNAEYVEVEPEQKTGHRIKEELFYPSNEEKMRLLQTLLEEEWPDRAIVFANTKHRCEDIWGHLAADGHRVGLLTGDVAQKKRLRILEEFTRGDLDILVATDVAARGLHIPAVTHVFNYDLPDDCEDYVHRIGRTGRAGASGHSISLACEEYALNLPAIETYIGHSIPVSKYNPDALMTDLPKPLRLTRARPGNGPRRNGPPRNRRRSG.

The Q motif signature appears at 9–37; that stretch reads QKFSDFALHPAVIEALEKKGFHNCTPIQA. The Helicase ATP-binding domain maps to 40-219; sequence LPLTLEGRDV…FEQMNNAEYV (180 aa). Residue 53–60 coordinates ATP; that stretch reads AQTGTGKT. A DEAD box motif is present at residues 165–168; that stretch reads DEAD. Residues 245 to 390 form the Helicase C-terminal domain; sequence RLLQTLLEEE…VSKYNPDALM (146 aa). The tract at residues 396 to 421 is disordered; that stretch reads PLRLTRARPGNGPRRNGPPRNRRRSG. Low complexity predominate over residues 403-414; sequence RPGNGPRRNGPP.

This sequence belongs to the DEAD box helicase family. RhlB subfamily. Component of the RNA degradosome, which is a multiprotein complex involved in RNA processing and mRNA degradation.

It localises to the cytoplasm. It catalyses the reaction ATP + H2O = ADP + phosphate + H(+). Its function is as follows. DEAD-box RNA helicase involved in RNA degradation. Has RNA-dependent ATPase activity and unwinds double-stranded RNA. The chain is ATP-dependent RNA helicase RhlB from Klebsiella pneumoniae subsp. pneumoniae (strain ATCC 700721 / MGH 78578).